A 156-amino-acid chain; its full sequence is RING finger protein 224 (156 aa).

The segment at 24 to 71 (CIICCSAYDLSGHLPRRLYCGHTFCQACVRRLDTPAPEQRWIPCPQCR) adopts an RING-type zinc-finger fold.

In Homo sapiens (Human), this protein is RING finger protein 224 (RNF224).